A 759-amino-acid chain; its full sequence is Mitogen-activated protein kinase kinase kinase 1a (759 aa).

Composition is skewed to basic and acidic residues over residues 1-17, 25-36, and 52-64; these read MIEE…DRGS, SFEDKGSSHDWK, and AKKD…KVDS. Disordered regions lie at residues 1–90, 122–160, 165–184, and 195–239; these read MIEE…NLSK, LGIE…SHDF, SRVD…LAPM, and RKHR…PDPL. Residues 72 to 85 show a composition bias toward low complexity; the sequence is VHSTSSPRLSPASS. One can recognise a Protein kinase domain in the interval 426-679; that stretch reads WAKGEFLGSG…CDMLLAHPFI (254 aa). Residues 432 to 440 and lysine 454 contribute to the ATP site; that span reads LGSGTFGSV. Catalysis depends on aspartate 549, which acts as the Proton acceptor.

The protein belongs to the protein kinase superfamily. STE Ser/Thr protein kinase family. MAP kinase kinase kinase subfamily.

The protein resides in the cell membrane. It catalyses the reaction L-seryl-[protein] + ATP = O-phospho-L-seryl-[protein] + ADP + H(+). It carries out the reaction L-threonyl-[protein] + ATP = O-phospho-L-threonyl-[protein] + ADP + H(+). In terms of biological role, the CERK1, MEKK1a/b, MKK1a/b/c and MPK4a/b proteins are involved in pathogen defense. The pathway induces rapid growth inhibition, cell wall depositions and accumulation of defense-related transcripts. This protein is required for responses to chitin and acts redundantly with MEKK1b. In Physcomitrium patens (Spreading-leaved earth moss), this protein is Mitogen-activated protein kinase kinase kinase 1a.